The following is a 228-amino-acid chain: tRNA (carboxymethyluridine(34)-5-O)-methyltransferase (228 aa).

The protein localises to the cytoplasm. Its subcellular location is the nucleus. The enzyme catalyses 5-(carboxymethyl)uridine(34) in tRNA + S-adenosyl-L-methionine = 5-(2-methoxy-2-oxoethyl)uridine(34) in tRNA + S-adenosyl-L-homocysteine. Functionally, required for the methylation of the wobble bases at position 34 in tRNA. Appears to have a role in stress-response. The chain is tRNA (carboxymethyluridine(34)-5-O)-methyltransferase (trm9) from Schizosaccharomyces pombe (strain 972 / ATCC 24843) (Fission yeast).